A 403-amino-acid polypeptide reads, in one-letter code: PP2A regulatory subunit TAP46 (403 aa).

2 disordered regions span residues glutamate 158–aspartate 184 and alanine 351–glycine 403. 2 stretches are compositionally biased toward acidic residues: residues glutamate 174–aspartate 184 and glutamate 366–alanine 375. A compositionally biased stretch (basic and acidic residues) spans alanine 376–proline 391.

It belongs to the IGBP1/TAP42 family.

In terms of biological role, involved in the regulation of the TOR signaling pathway. Seems to act as a regulator of PP2A catalytic activity. The polypeptide is PP2A regulatory subunit TAP46 (Nicotiana tabacum (Common tobacco)).